Here is a 594-residue protein sequence, read N- to C-terminus: UvrABC system protein C (594 aa).

A GIY-YIG domain is found at 13-99 (NGSGVYQYFD…IKQLKPKYNI (87 aa)). The 36-residue stretch at 205–240 (DKLIKELQLKMDRLSSNLRFEEALIYRDRISKIQKI) folds into the UVR domain.

Belongs to the UvrC family. As to quaternary structure, interacts with UvrB in an incision complex.

The protein resides in the cytoplasm. Its function is as follows. The UvrABC repair system catalyzes the recognition and processing of DNA lesions. UvrC both incises the 5' and 3' sides of the lesion. The N-terminal half is responsible for the 3' incision and the C-terminal half is responsible for the 5' incision. The polypeptide is UvrABC system protein C (Helicobacter acinonychis (strain Sheeba)).